Reading from the N-terminus, the 376-residue chain is MEVQLTNRQQHILWATVRHYIATAEPVGSKALVEEYDLGVSSATIRNVMGVLEKSGLLYQPHASAGRVPSDSGYRIYVDQLITPSLRSRSVSQTDATRTETLGREIEVALQKHLQWEDRSLETLLQGAAQILATLSGCISLITMPQTTTALLRHLQLVQIEAGRIMLIVVTDGYETHSKLMDLSPIPEETQRDSEVIDRELQIVSNFLNTHLRGRSLLELANLNWSELDQEFQRYGEFLKNSVAELTRRTLAPTATQIMVRGVSEVLRQPEFSQLQQVQTIIHLLEEEQDQLWRLIFEEPEPEDIGKSRVTVRIGAENPLEPIRTCTLISSNYRRGSIPVGSVGVLGPTRLDYESAIAVVASAADYLSEAFSYFNP.

It belongs to the HrcA family.

In terms of biological role, negative regulator of class I heat shock genes (grpE-dnaK-dnaJ and groELS operons). Prevents heat-shock induction of these operons. The chain is Heat-inducible transcription repressor HrcA from Nostoc punctiforme (strain ATCC 29133 / PCC 73102).